We begin with the raw amino-acid sequence, 354 residues long: Uroporphyrinogen decarboxylase (354 aa).

Substrate-binding positions include 27-31 (RQAGR), Asp-77, Tyr-154, Thr-209, and His-327.

It belongs to the uroporphyrinogen decarboxylase family. As to quaternary structure, homodimer.

The protein resides in the cytoplasm. It catalyses the reaction uroporphyrinogen III + 4 H(+) = coproporphyrinogen III + 4 CO2. It participates in porphyrin-containing compound metabolism; protoporphyrin-IX biosynthesis; coproporphyrinogen-III from 5-aminolevulinate: step 4/4. Its function is as follows. Catalyzes the decarboxylation of four acetate groups of uroporphyrinogen-III to yield coproporphyrinogen-III. In Salmonella paratyphi B (strain ATCC BAA-1250 / SPB7), this protein is Uroporphyrinogen decarboxylase.